The chain runs to 247 residues: 2,3-bisphosphoglycerate-dependent phosphoglycerate mutase (247 aa).

Substrate contacts are provided by residues 8–15, 21–22, Arg60, 87–90, Lys98, 114–115, and 183–184; these read RHGESQWN, TG, ERHY, RR, and GN. The Tele-phosphohistidine intermediate role is filled by His9. The Proton donor/acceptor role is filled by Glu87.

The protein belongs to the phosphoglycerate mutase family. BPG-dependent PGAM subfamily.

It carries out the reaction (2R)-2-phosphoglycerate = (2R)-3-phosphoglycerate. Its pathway is carbohydrate degradation; glycolysis; pyruvate from D-glyceraldehyde 3-phosphate: step 3/5. Functionally, catalyzes the interconversion of 2-phosphoglycerate and 3-phosphoglycerate. This is 2,3-bisphosphoglycerate-dependent phosphoglycerate mutase from Chlorobium phaeobacteroides (strain DSM 266 / SMG 266 / 2430).